A 559-amino-acid chain; its full sequence is DNA ligase (559 aa).

Glu248 contributes to the ATP binding site. Catalysis depends on Lys250, which acts as the N6-AMP-lysine intermediate. ATP contacts are provided by Arg255, Arg270, Glu300, Phe341, Arg417, and Lys423.

Belongs to the ATP-dependent DNA ligase family. Mg(2+) is required as a cofactor.

It catalyses the reaction ATP + (deoxyribonucleotide)n-3'-hydroxyl + 5'-phospho-(deoxyribonucleotide)m = (deoxyribonucleotide)n+m + AMP + diphosphate.. DNA ligase that seals nicks in double-stranded DNA during DNA replication, DNA recombination and DNA repair. This Methanopyrus kandleri (strain AV19 / DSM 6324 / JCM 9639 / NBRC 100938) protein is DNA ligase.